Reading from the N-terminus, the 438-residue chain is tRNA-2-methylthio-N(6)-dimethylallyladenosine synthase (438 aa).

The MTTase N-terminal domain maps to 3 to 123 (KRLFVKTYGC…LPEMVAQAAR (121 aa)). [4Fe-4S] cluster contacts are provided by Cys-12, Cys-48, Cys-86, Cys-160, Cys-164, and Cys-167. A Radical SAM core domain is found at 146-374 (HAEGTSAFLS…QALLLDQTMR (229 aa)). The TRAM domain occupies 377–438 (HACVGREMRI…HPNSLEAVPA (62 aa)).

Belongs to the methylthiotransferase family. MiaB subfamily. As to quaternary structure, monomer. It depends on [4Fe-4S] cluster as a cofactor.

The protein localises to the cytoplasm. It carries out the reaction N(6)-dimethylallyladenosine(37) in tRNA + (sulfur carrier)-SH + AH2 + 2 S-adenosyl-L-methionine = 2-methylsulfanyl-N(6)-dimethylallyladenosine(37) in tRNA + (sulfur carrier)-H + 5'-deoxyadenosine + L-methionine + A + S-adenosyl-L-homocysteine + 2 H(+). In terms of biological role, catalyzes the methylthiolation of N6-(dimethylallyl)adenosine (i(6)A), leading to the formation of 2-methylthio-N6-(dimethylallyl)adenosine (ms(2)i(6)A) at position 37 in tRNAs that read codons beginning with uridine. In Paramagnetospirillum magneticum (strain ATCC 700264 / AMB-1) (Magnetospirillum magneticum), this protein is tRNA-2-methylthio-N(6)-dimethylallyladenosine synthase.